A 612-amino-acid chain; its full sequence is Glucoamylase (612 aa).

An N-terminal signal peptide occupies residues 1 to 19 (MVSFSSCLRALALGSSVLA). Residues 20–25 (VQPVLR) constitute a propeptide that is removed on maturation. N-linked (GlcNAc...) asparagine glycosylation is present at asparagine 39. Tryptophan 146 is a substrate binding site. Aspartate 202 (proton acceptor) is an active-site residue. Residue glutamate 205 is the Proton donor of the active site. Intrachain disulfides connect cysteine 236–cysteine 239, cysteine 248–cysteine 475, and cysteine 288–cysteine 296. Positions 506–612 (CQVPTTVSVT…KSAVQSDVWR (107 aa)) constitute a CBM20 domain.

Belongs to the glycosyl hydrolase 15 family.

The enzyme catalyses Hydrolysis of terminal (1-&gt;4)-linked alpha-D-glucose residues successively from non-reducing ends of the chains with release of beta-D-glucose.. This is Glucoamylase (glaA) from Aspergillus oryzae (strain ATCC 42149 / RIB 40) (Yellow koji mold).